Reading from the N-terminus, the 232-residue chain is Orotate phosphoribosyltransferase (232 aa).

Residues arginine 107, lysine 108, lysine 111, and 133–141 (EDLTTDGGS) contribute to the 5-phospho-alpha-D-ribose 1-diphosphate site. Threonine 137 is a binding site for orotate.

The protein belongs to the purine/pyrimidine phosphoribosyltransferase family. PyrE subfamily. As to quaternary structure, homodimer. The cofactor is Mg(2+).

It carries out the reaction orotidine 5'-phosphate + diphosphate = orotate + 5-phospho-alpha-D-ribose 1-diphosphate. It participates in pyrimidine metabolism; UMP biosynthesis via de novo pathway; UMP from orotate: step 1/2. In terms of biological role, catalyzes the transfer of a ribosyl phosphate group from 5-phosphoribose 1-diphosphate to orotate, leading to the formation of orotidine monophosphate (OMP). The chain is Orotate phosphoribosyltransferase from Cereibacter sphaeroides (strain ATCC 17023 / DSM 158 / JCM 6121 / CCUG 31486 / LMG 2827 / NBRC 12203 / NCIMB 8253 / ATH 2.4.1.) (Rhodobacter sphaeroides).